Consider the following 1113-residue polypeptide: Translation initiation factor IF-2 (1113 aa).

4 stretches are compositionally biased toward polar residues: residues Gln-56 to Glu-72, Lys-129 to Val-139, Leu-162 to Val-187, and Thr-194 to Ser-205. Disordered stretches follow at residues Gln-56 to Asn-446 and Leu-470 to Arg-504. Positions Pro-248–Lys-265 are enriched in low complexity. Residues Arg-415–Arg-429 are compositionally biased toward basic and acidic residues. Composition is skewed to basic residues over residues Ala-474–Asn-483 and Thr-490–Arg-504. A tr-type G domain is found at Arg-605–Leu-777. The segment at Gly-614 to Thr-621 is G1. Gly-614–Thr-621 is a GTP binding site. The G2 stretch occupies residues Gly-639–His-643. A G3 region spans residues Asp-664–Gly-667. GTP contacts are provided by residues Asp-664–His-668 and Asn-718–Asp-721. The G4 stretch occupies residues Asn-718–Asp-721. Residues Ser-754–Ile-756 form a G5 region.

It belongs to the TRAFAC class translation factor GTPase superfamily. Classic translation factor GTPase family. IF-2 subfamily.

Its subcellular location is the cytoplasm. In terms of biological role, one of the essential components for the initiation of protein synthesis. Protects formylmethionyl-tRNA from spontaneous hydrolysis and promotes its binding to the 30S ribosomal subunits. Also involved in the hydrolysis of GTP during the formation of the 70S ribosomal complex. The sequence is that of Translation initiation factor IF-2 from Prochlorococcus marinus (strain MIT 9211).